The chain runs to 394 residues: Elongation factor Tu (394 aa).

The tr-type G domain maps to 10–204; sequence KPHVNVGTIG…ALDTYIPEPE (195 aa). Residues 19–26 form a G1 region; it reads GHVDHGKT. Residue 19-26 participates in GTP binding; the sequence is GHVDHGKT. Mg(2+) is bound at residue Thr-26. Residues 60 to 64 are G2; sequence GITIN. The segment at 81–84 is G3; the sequence is DCPG. GTP is bound by residues 81-85 and 136-139; these read DCPGH and NKCD. The tract at residues 136-139 is G4; the sequence is NKCD. The tract at residues 174-176 is G5; it reads SAL.

Belongs to the TRAFAC class translation factor GTPase superfamily. Classic translation factor GTPase family. EF-Tu/EF-1A subfamily. Monomer.

It localises to the cytoplasm. It catalyses the reaction GTP + H2O = GDP + phosphate + H(+). Its function is as follows. GTP hydrolase that promotes the GTP-dependent binding of aminoacyl-tRNA to the A-site of ribosomes during protein biosynthesis. The polypeptide is Elongation factor Tu (Shewanella halifaxensis (strain HAW-EB4)).